A 234-amino-acid chain; its full sequence is Ribosomal RNA small subunit methyltransferase G (234 aa).

Residues Gly-74, Phe-79, Ala-125 to Glu-126, and Arg-144 contribute to the S-adenosyl-L-methionine site.

The protein belongs to the methyltransferase superfamily. RNA methyltransferase RsmG family.

The protein resides in the cytoplasm. Functionally, specifically methylates the N7 position of a guanine in 16S rRNA. This is Ribosomal RNA small subunit methyltransferase G from Roseiflexus sp. (strain RS-1).